The following is a 504-amino-acid chain: MSTKLILSFSLCLMVLSCSAQLWPWQKGQGSRPHHGRQQHQFQHQCDIQRLTASEPSRRVRSEAGVTEIWDHDTPEFRCTGFVAVRVVIQPGGLLLPSYSNAPYITFVEQGRGVQGVVIPGCPETFQSDSEFEYPQSQRGRHSRQSESEEESSRGDQHQKIFRIREGDVIPSPAGVVQWTHNDGNDDLISVTLLDANSYHKQLDENVRSFFLAGQSQRETREEGSDRQSRESDDDEALLGANILSGFQDEILHELFRDVDRETISKLRGENDQRGFIVQAQDLKLRVPQDFEEEYERERGDRRRGQGGSGRSNGVEQGFCNLKFRRNFNTPTNTYVFNPRAGRINTVNSNSLPILEFLQLSAQHVVLYKNAIIGPRWNLNAHSALYVTRGEGRVQVVGDEGKSVFDDKVQRGQILVVPQGFAVVLKAGREGLEWVELKNSGNAITSPIGGRTSVLRAIPVEVLANSYDISTKEAYKLKNGRQEVEVFRPFQSRDEKERERFSIV.

A signal peptide spans 1-20 (MSTKLILSFSLCLMVLSCSA). Intrachain disulfides connect Cys46–Cys79 and Cys122–Cys320. Residues 51–265 (LTASEPSRRV…FRDVDRETIS (215 aa)) enclose the Cupin type-1 1 domain. Disordered stretches follow at residues 128-158 (SDSEFEYPQSQRGRHSRQSESEEESSRGDQH), 214-237 (GQSQRETREEGSDRQSRESDDDEA), and 289-314 (QDFEEEYERERGDRRRGQGGSGRSNG). Composition is skewed to basic and acidic residues over residues 144-158 (RQSESEEESSRGDQH) and 218-231 (RETREEGSDRQSRE). The 150-residue stretch at 326-475 (RNFNTPTNTY…SYDISTKEAY (150 aa)) folds into the Cupin type-1 2 domain.

This sequence belongs to the 11S seed storage protein (globulins) family. In terms of assembly, hexamer; each subunit is composed of an acidic and a basic chain derived from a single precursor and linked by a disulfide bond.

Functionally, seed storage protein. This chain is 13S globulin seed storage protein 2 (FA18), found in Fagopyrum esculentum (Common buckwheat).